We begin with the raw amino-acid sequence, 484 residues long: Gasdermin-D (484 aa).

Tyr37 carries the post-translational modification Phosphotyrosine. Position 56 is an S-(2-succinyl)cysteine (Cys56). 2 beta stranded membrane passes run 91 to 97 (QGSVELA) and 103 to 108 (KIAGGA). The residue at position 158 (Tyr158) is a Phosphotyrosine. Transmembrane regions (beta stranded) follow at residues 180–186 (GSGRFSL) and 191–197 (CLQGEGQ). Ser185 carries the phosphoserine modification. S-(2-succinyl)cysteine occurs at positions 191 and 268. Cys191 carries S-palmitoyl cysteine lipidation. A linker helix loop region spans residues 277-296 (VPAEGAFTEDFQGLRAEVET). Cys309 is modified (S-(2-succinyl)cysteine). Residue Ser338 is glycosylated (O-linked (GlcNAc) serine). Cys467 is modified (S-(2-succinyl)cysteine).

It belongs to the gasdermin family. Homooligomer; homooligomeric ring-shaped pore complex containing 27-28 subunits when inserted in the membrane. Homooligomerization is promoted by the mTORC1 complex in macrophages. In response to a canonical inflammasome stimulus, such as nigericin, recruited to NLRP3 inflammasone with similar kinetics to that of uncleaved CASP1 precursor. Although this recruitment is also observed in the absence of PYCARD, it is more efficient in its presence. In terms of processing, cleavage at Asp-275 by CASP1 (mature and uncleaved precursor forms), CASP4, CASP5 or CASP8 relieves autoinhibition and is sufficient to initiate pyroptosis. Cleavage by CASP1 and CASP4 is not strictly dependent on the consensus cleavage site on GSDMD but depends on an exosite interface on CASP1 that recognizes and binds the Gasdermin-D, C-terminal (GSDMD-CT) part. Cleavage by CASP8 takes place following inactivation of MAP3K7/TAK1 by Yersinia toxin YopJ. Cleavage at Asp-87 by CASP3 or CASP7 inactivates the ability to mediate pyroptosis, but generates the Gasdermin-D, p13 chain, which translocates to the nucleus and acts as a transcription regulator. Cleavage by papain allergen generates the Gasdermin-D, p40 chain. Post-translationally, palmitoylated at Cys-191 by ZDHHC5 and ZDHHC9 in response to microbial infection and danger signals. Palmitoylation takes place before cleavage by caspases (CASP1, CASP4, CASP5 or CASP8) and is required for membrane translocation and pore formation. Depalmitoylated by LYPLA2. Succination of Cys-191 by the Krebs cycle intermediate fumarate, which leads to S-(2-succinyl)cysteine residues, inhibits processing by caspases, and ability to initiate pyroptosis. Succination modification is catalyzed by a non-enzymatic reaction caused by an accumulation of fumarate. In terms of processing, glycosylated: O-GlcNAcylation by OGT leads to reduced cleavage by CASP4 and decreased LPS-induced endothelial cell pyroptosis. Post-translationally, (Microbial infection) Cleaved and inactivated by Protease 3C from Human enterovirus 71 (EV71), preventing GSDMD-mediated pyroptosis. (Microbial infection) Cleaved and inactivated by the 3C-like proteinase nsp5 from human coronavirus SARS-CoV-2, preventing GSDMD-mediated pyroptosis. In terms of processing, (Microbial infection) Ubiquitinated by S.flexneri IpaH7.8, leading to its degradation by the proteasome. In terms of tissue distribution, expressed in the suprabasal cells of esophagus, as well as in the isthmus/neck, pit, and gland of the stomach, suggesting preferential expression in differentiating cells.

Its subcellular location is the cytoplasm. The protein resides in the cytosol. It localises to the inflammasome. It is found in the cell membrane. The protein localises to the secreted. Its subcellular location is the mitochondrion membrane. The protein resides in the nucleus. Its activity is regulated as follows. The full-length protein before cleavage is inactive: intramolecular interactions between N- and C-terminal domains mediate autoinhibition in the absence of activation signal. The intrinsic pyroptosis-inducing activity is carried by the released N-terminal moiety (Gasdermin-D, N-terminal) following cleavage by caspases CASP1, CASP4, CASP5 or CASP8. Cleavage at Asp-87 by CASP3 or CASP7 inactivates the ability to mediate pyroptosis. Homooligomerization and pore formation is specifically inhibited by VHH(GSDMD-1) and, to a lesser extent, VHH(GSDMD-2) nanobodies, protecting against excessive pyroptosis. Inhibited by small molecule NU6300, which covalently reacts with Cys-191, thereby preventing palmitoylation and pyroptosis. In terms of biological role, precursor of a pore-forming protein that plays a key role in host defense against pathogen infection and danger signals. This form constitutes the precursor of the pore-forming protein: upon cleavage, the released N-terminal moiety (Gasdermin-D, N-terminal) binds to membranes and forms pores, triggering pyroptosis. Functionally, promotes pyroptosis in response to microbial infection and danger signals. Produced by the cleavage of gasdermin-D by inflammatory caspases CASP1, CASP4 or CASP5 in response to canonical, as well as non-canonical (such as cytosolic LPS) inflammasome activators. After cleavage, moves to the plasma membrane where it strongly binds to inner leaflet lipids, including monophosphorylated phosphatidylinositols, such as phosphatidylinositol 4-phosphate, bisphosphorylated phosphatidylinositols, such as phosphatidylinositol (4,5)-bisphosphate, as well as phosphatidylinositol (3,4,5)-bisphosphate, and more weakly to phosphatidic acid and phosphatidylserine. Homooligomerizes within the membrane and forms pores of 10-15 nanometers (nm) of inner diameter, allowing the release of mature interleukin-1 (IL1B and IL18) and triggering pyroptosis. Gasdermin pores also allow the release of mature caspase-7 (CASP7). In some, but not all, cells types, pyroptosis is followed by pyroptotic cell death, which is caused by downstream activation of ninjurin-1 (NINJ1), which mediates membrane rupture (cytolysis). Also forms pores in the mitochondrial membrane, resulting in release of mitochondrial DNA (mtDNA) into the cytosol. Gasdermin-D, N-terminal released from pyroptotic cells into the extracellular milieu rapidly binds to and kills both Gram-negative and Gram-positive bacteria, without harming neighboring mammalian cells, as it does not disrupt the plasma membrane from the outside due to lipid-binding specificity. Under cell culture conditions, also active against intracellular bacteria, such as Listeria monocytogenes. Also active in response to MAP3K7/TAK1 inactivation by Yersinia toxin YopJ, which triggers cleavage by CASP8 and subsequent activation. Required for mucosal tissue defense against enteric pathogens. Activation of the non-canonical inflammasome in brain endothelial cells can lead to excessive pyroptosis, leading to blood-brain barrier breakdown. Strongly binds to bacterial and mitochondrial lipids, including cardiolipin. Does not bind to unphosphorylated phosphatidylinositol, phosphatidylethanolamine nor phosphatidylcholine. Transcription coactivator produced by the cleavage by CASP3 or CASP7 in the upper small intestine in response to dietary antigens. Required to maintain food tolerance in small intestine: translocates to the nucleus and acts as a coactivator for STAT1 to induce the transcription of CIITA and MHC class II molecules, which in turn induce type 1 regulatory T (Tr1) cells in upper small intestine. Its function is as follows. Produced by the cleavage by papain allergen. After cleavage, moves to the plasma membrane and homooligomerizes within the membrane and forms pores of 10-15 nanometers (nm) of inner diameter, allowing the specific release of mature interleukin-33 (IL33), promoting type 2 inflammatory immune response. The polypeptide is Gasdermin-D (Homo sapiens (Human)).